The sequence spans 158 residues: Small ribosomal subunit protein uS9 (158 aa).

The protein belongs to the universal ribosomal protein uS9 family.

The protein is Small ribosomal subunit protein uS9 of Brucella melitensis biotype 1 (strain ATCC 23456 / CCUG 17765 / NCTC 10094 / 16M).